Here is a 462-residue protein sequence, read N- to C-terminus: Probable acid phosphatase SPBC4.06 (462 aa).

The Nucleophile role is filled by His-35. Catalysis depends on Asp-330, which acts as the Proton donor.

It belongs to the histidine acid phosphatase family.

It localises to the mitochondrion. The catalysed reaction is a phosphate monoester + H2O = an alcohol + phosphate. The sequence is that of Probable acid phosphatase SPBC4.06 from Schizosaccharomyces pombe (strain 972 / ATCC 24843) (Fission yeast).